Reading from the N-terminus, the 293-residue chain is MLRSKLSSLREYLTPINHNSNYETSGEISPEEFVQAGDYLVYKFPTWQWGSAPKKLQKDFLPPDKQFLITKHVPSYQRAQSYLGNTEDLAEDEEELDDGWVKSHRLTHEDPKRDIATDKKVPDIEDLDDFIDEDAEDADGEEFQDLGNSNLRRYDLYITYSTSYRVPKMYLVGFNDNGIPLLPHQMFEDISGDYRDKTATIENLPVSFNTTSVSIHPCKHSSVMKVLMKHAKTSREKAREFEPEAFVTGENLEPATETTQDTGIRVDQYLVVFLKFIASVTPGIGYDYTMDAL.

A flexible region region spans residues 82 to 149; it reads YLGNTEDLAE…GEEFQDLGNS (68 aa). C218 serves as the catalytic Glycyl thioester intermediate. The segment at 222–268 is handle region; it reads SVMKVLMKHAKTSREKAREFEPEAFVTGENLEPATETTQDTGIRVDQ.

This sequence belongs to the ATG3 family. Monomer. Interacts with ATG8 through an intermediate thioester bond through the C-terminal Gly of ATG8. Also interacts with the 40 amino acid C-terminal region of the E1-like ATG7 enzyme. Also interacts with the ATG12-ATG5 conjugate.

The protein localises to the cytoplasm. E2 conjugating enzyme required for the cytoplasm to vacuole transport (Cvt) and autophagy. Required for selective autophagic degradation of the nucleus (nucleophagy) as well as for mitophagy which contributes to regulate mitochondrial quantity and quality by eliminating the mitochondria to a basal level to fulfill cellular energy requirements and preventing excess ROS production. Responsible for the E2-like covalent binding of phosphatidylethanolamine to the C-terminal Gly of ATG8. The ATG12-ATG5 conjugate plays a role of an E3 and promotes the transfer of ATG8 from ATG3 to phosphatidylethanolamine (PE). This step is required for the membrane association of ATG8. The formation of the ATG8-phosphatidylethanolamine conjugate is essential for autophagy and for the cytoplasm to vacuole transport (Cvt). The ATG8-PE conjugate mediates tethering between adjacent membranes and stimulates membrane hemifusion, leading to expansion of the autophagosomal membrane during autophagy. The sequence is that of Autophagy-related protein 3 (ATG3) from Meyerozyma guilliermondii (strain ATCC 6260 / CBS 566 / DSM 6381 / JCM 1539 / NBRC 10279 / NRRL Y-324) (Yeast).